Consider the following 95-residue polypeptide: Corticostatin-3 (95 aa).

Positions 1–19 (MRTLALLAAILLVALQAQA) are cleaved as a signal peptide. The propeptide occupies 20-62 (EHVSVSIDEVVDQQPPQAEDQDVAIYVKEHESSALEALGVKAG). Intrachain disulfides connect cysteine 65–cysteine 93, cysteine 67–cysteine 82, and cysteine 72–cysteine 92.

Belongs to the alpha-defensin family.

The protein localises to the secreted. Functionally, this peptide has antibiotic, anti-fungi and antiviral activity. It also inhibits corticotropin (ACTH) stimulated corticosterone production. This Oryctolagus cuniculus (Rabbit) protein is Corticostatin-3.